The chain runs to 260 residues: Methylphosphonate hydroxylase (260 aa).

Lysine 107 contacts 2-oxoglutarate. Residues histidine 117, aspartate 119, and histidine 195 each contribute to the Fe cation site.

This sequence belongs to the PhyH family. The cofactor is Fe(2+).

The catalysed reaction is methylphosphonate + 2-oxoglutarate + O2 = hydroxymethylphosphonate + succinate + CO2. In terms of biological role, part of an oxidative pathway for utilization of methylphosphonic acid as a phosphate source. Catalyzes the conversion of methylphosphonic acid to hydroxymethylphosphonic acid. Is specific for the hydroxylation of methylphosphonate. This Gimesia maris (strain ATCC 29201 / DSM 8797 / 534-30) (Planctomyces maris) protein is Methylphosphonate hydroxylase.